Reading from the N-terminus, the 378-residue chain is Cytochrome P450 monooxygenase pytD (378 aa).

C321 serves as a coordination point for heme.

Belongs to the cytochrome P450 family. Requires heme as cofactor.

It participates in secondary metabolite biosynthesis. Cytochrome P450 monooxygenase pytD; part of the gene cluster that mediates the biosynthesis of pyranterreones, a family of antioxidative compounds. The first step of pyranonigrins biosynthesis is performed by the hybrid PKS-NRPS synthetase pytA that condenses 4 malonyl-CoA units ato the acetyl starter unit by the modular PKS of pytA. The acyl chain is then connected to an L-serine through the amide bond by the modular NRPS of pytA. A tetramic acid is formed and released from the PKS-NRPS pytA to give pyranterreone 5 with the help of the thioesterase pytI. Pyranterreone 5 could be methylated by pytC to afford pyranterreone 6. Both pyranterreones 5 and 6 are subsequently oxidized by the FAD-linked oxidoreductase pytB and the cytochrome P450 monooxygenase pytD to form the fused gamma-pyrone core, resulting in pyranterreones 7 and 11, respectively. The hydroxy group at C-8 of pyranterreones 7 and 11 are dehydrated by the aspartyl protease pytH to form a delta-7 double bond to give pyranterreones 3 and 1, 2 accordingly. The exo-methylene of pyranterreone 3 could be reduced into a pendant methyl by reductase pytE to provide pyranterreone 4, also known as cordylactam. Pyranterreone 4 can be reconverted to pyranterreone 3 through pytB-catalyzed dehydrogenation or further oxidized to pyranterreones 9 and 10. This is Cytochrome P450 monooxygenase pytD from Aspergillus terreus (strain NIH 2624 / FGSC A1156).